Consider the following 376-residue polypeptide: Chaperone protein DnaJ (376 aa).

In terms of domain architecture, J spans 5 to 70 (DYYEVLGVGR…DKKAAYDQFG (66 aa)). Residues 132-210 (GLTKELKVPT…CHGNGRVEKT (79 aa)) form a CR-type zinc finger. Residues C145, C148, C162, C165, C184, C187, C198, and C201 each coordinate Zn(2+). CXXCXGXG motif repeat units follow at residues 145-152 (CDSCDGSG), 162-169 (CGTCHGMG), 184-191 (CPTCHGRG), and 198-205 (CSKCHGNG).

It belongs to the DnaJ family. In terms of assembly, homodimer. Requires Zn(2+) as cofactor.

The protein localises to the cytoplasm. In terms of biological role, participates actively in the response to hyperosmotic and heat shock by preventing the aggregation of stress-denatured proteins and by disaggregating proteins, also in an autonomous, DnaK-independent fashion. Unfolded proteins bind initially to DnaJ; upon interaction with the DnaJ-bound protein, DnaK hydrolyzes its bound ATP, resulting in the formation of a stable complex. GrpE releases ADP from DnaK; ATP binding to DnaK triggers the release of the substrate protein, thus completing the reaction cycle. Several rounds of ATP-dependent interactions between DnaJ, DnaK and GrpE are required for fully efficient folding. Also involved, together with DnaK and GrpE, in the DNA replication of plasmids through activation of initiation proteins. This chain is Chaperone protein DnaJ, found in Shewanella amazonensis (strain ATCC BAA-1098 / SB2B).